We begin with the raw amino-acid sequence, 334 residues long: Fructose-1,6-bisphosphatase class 1 (334 aa).

Mg(2+)-binding residues include Glu92, Asp114, Leu116, and Asp117. Substrate is bound by residues 117–120 (DGSS) and Asn209. A Mg(2+)-binding site is contributed by Glu281.

This sequence belongs to the FBPase class 1 family. In terms of assembly, homotetramer. Requires Mg(2+) as cofactor.

Its subcellular location is the cytoplasm. It catalyses the reaction beta-D-fructose 1,6-bisphosphate + H2O = beta-D-fructose 6-phosphate + phosphate. The protein operates within carbohydrate biosynthesis; gluconeogenesis. The protein is Fructose-1,6-bisphosphatase class 1 of Nitrosomonas europaea (strain ATCC 19718 / CIP 103999 / KCTC 2705 / NBRC 14298).